Reading from the N-terminus, the 162-residue chain is MSIAVFPGSFDPLTNGHLDIIKRASGIFEKVIVGVGNNTSKAALFTPQEKMTLISTVVKDLPNVEVAIMKGLTVQFMNEVGAKYIVRGLRNGKDFEYERDIAGMNSALADVETVLLLAKPKNQNISSSMVKEIGSMGADNMVKFVPKAIVEALKERLNAQKK.

S9 is a binding site for substrate. ATP contacts are provided by residues 9 to 10 and H17; that span reads SF. 3 residues coordinate substrate: K41, T73, and R87. Residues 88–90, E98, and 122–128 each bind ATP; these read GLR and NQNISSS.

Belongs to the bacterial CoaD family. As to quaternary structure, homohexamer. It depends on Mg(2+) as a cofactor.

The protein resides in the cytoplasm. It catalyses the reaction (R)-4'-phosphopantetheine + ATP + H(+) = 3'-dephospho-CoA + diphosphate. It participates in cofactor biosynthesis; coenzyme A biosynthesis; CoA from (R)-pantothenate: step 4/5. Its function is as follows. Reversibly transfers an adenylyl group from ATP to 4'-phosphopantetheine, yielding dephospho-CoA (dPCoA) and pyrophosphate. The polypeptide is Phosphopantetheine adenylyltransferase (Leuconostoc mesenteroides subsp. mesenteroides (strain ATCC 8293 / DSM 20343 / BCRC 11652 / CCM 1803 / JCM 6124 / NCDO 523 / NBRC 100496 / NCIMB 8023 / NCTC 12954 / NRRL B-1118 / 37Y)).